Here is a 396-residue protein sequence, read N- to C-terminus: Protein GTS1 (396 aa).

An Arf-GAP domain is found at 14-141 (DRELKELINS…FRYDEIKPED (128 aa)). A C4-type zinc finger spans residues 30-53 (CGECGNFYPTWCSVNLGVFLCGRC). Residues 148–161 (DFDGESDRFDERNR) are compositionally biased toward basic and acidic residues. Disordered regions lie at residues 148–194 (DFDG…SGSR) and 233–266 (KSSS…QPAI). Ser153 carries the phosphoserine modification. Tyr181 carries the post-translational modification Phosphotyrosine. 2 positions are modified to phosphoserine: Ser184 and Ser187. Positions 193-234 (SRYSRQLAELKDMGFGDTNKNLDALSSAHGNINRAIDYLEKS) constitute a UBA domain. Positions 234-249 (SSSSRNSVSAAATTST) are enriched in low complexity. At Ser240 the chain carries Phosphoserine. Thr249 bears the Phosphothreonine mark.

The protein localises to the nucleus. Appears to modulate the timing of budding to obtain an appropriate cell size independent of the DNA replication cycle. Transcription factor involved in both heat resistance and flocculation. This Saccharomyces cerevisiae (strain ATCC 204508 / S288c) (Baker's yeast) protein is Protein GTS1 (GTS1).